Reading from the N-terminus, the 201-residue chain is Probable molybdenum cofactor guanylyltransferase (201 aa).

GTP is bound by residues 16–18, lysine 28, aspartate 75, and aspartate 107; that span reads LAG. Aspartate 107 serves as a coordination point for Mg(2+).

It belongs to the MobA family. It depends on Mg(2+) as a cofactor.

The protein localises to the cytoplasm. It catalyses the reaction Mo-molybdopterin + GTP + H(+) = Mo-molybdopterin guanine dinucleotide + diphosphate. In terms of biological role, transfers a GMP moiety from GTP to Mo-molybdopterin (Mo-MPT) cofactor (Moco or molybdenum cofactor) to form Mo-molybdopterin guanine dinucleotide (Mo-MGD) cofactor. The sequence is that of Probable molybdenum cofactor guanylyltransferase from Mycobacterium ulcerans (strain Agy99).